The primary structure comprises 229 residues: Putative N-acetylmannosamine-6-phosphate 2-epimerase (229 aa).

It belongs to the NanE family.

The enzyme catalyses an N-acyl-D-glucosamine 6-phosphate = an N-acyl-D-mannosamine 6-phosphate. It functions in the pathway amino-sugar metabolism; N-acetylneuraminate degradation; D-fructose 6-phosphate from N-acetylneuraminate: step 3/5. In terms of biological role, converts N-acetylmannosamine-6-phosphate (ManNAc-6-P) to N-acetylglucosamine-6-phosphate (GlcNAc-6-P). This Escherichia coli O7:K1 (strain IAI39 / ExPEC) protein is Putative N-acetylmannosamine-6-phosphate 2-epimerase.